Reading from the N-terminus, the 86-residue chain is Small ribosomal subunit protein uS17 (86 aa).

It belongs to the universal ribosomal protein uS17 family. Part of the 30S ribosomal subunit.

In terms of biological role, one of the primary rRNA binding proteins, it binds specifically to the 5'-end of 16S ribosomal RNA. The protein is Small ribosomal subunit protein uS17 of Streptococcus mutans serotype c (strain ATCC 700610 / UA159).